A 206-amino-acid polypeptide reads, in one-letter code: Thiamine-phosphate synthase (206 aa).

4-amino-2-methyl-5-(diphosphooxymethyl)pyrimidine contacts are provided by residues 36 to 40 and asparagine 68; that span reads QLRAK. Residues aspartate 69 and aspartate 88 each contribute to the Mg(2+) site. Serine 105 lines the 4-amino-2-methyl-5-(diphosphooxymethyl)pyrimidine pocket. 131 to 133 provides a ligand contact to 2-[(2R,5Z)-2-carboxy-4-methylthiazol-5(2H)-ylidene]ethyl phosphate; the sequence is TPT. Lysine 134 serves as a coordination point for 4-amino-2-methyl-5-(diphosphooxymethyl)pyrimidine. Glycine 162 contacts 2-[(2R,5Z)-2-carboxy-4-methylthiazol-5(2H)-ylidene]ethyl phosphate.

The protein belongs to the thiamine-phosphate synthase family. The cofactor is Mg(2+).

The catalysed reaction is 2-[(2R,5Z)-2-carboxy-4-methylthiazol-5(2H)-ylidene]ethyl phosphate + 4-amino-2-methyl-5-(diphosphooxymethyl)pyrimidine + 2 H(+) = thiamine phosphate + CO2 + diphosphate. It carries out the reaction 2-(2-carboxy-4-methylthiazol-5-yl)ethyl phosphate + 4-amino-2-methyl-5-(diphosphooxymethyl)pyrimidine + 2 H(+) = thiamine phosphate + CO2 + diphosphate. It catalyses the reaction 4-methyl-5-(2-phosphooxyethyl)-thiazole + 4-amino-2-methyl-5-(diphosphooxymethyl)pyrimidine + H(+) = thiamine phosphate + diphosphate. It functions in the pathway cofactor biosynthesis; thiamine diphosphate biosynthesis; thiamine phosphate from 4-amino-2-methyl-5-diphosphomethylpyrimidine and 4-methyl-5-(2-phosphoethyl)-thiazole: step 1/1. Functionally, condenses 4-methyl-5-(beta-hydroxyethyl)thiazole monophosphate (THZ-P) and 2-methyl-4-amino-5-hydroxymethyl pyrimidine pyrophosphate (HMP-PP) to form thiamine monophosphate (TMP). The polypeptide is Thiamine-phosphate synthase (Thermus thermophilus (strain ATCC BAA-163 / DSM 7039 / HB27)).